We begin with the raw amino-acid sequence, 709 residues long: Solute carrier family 15 member 1 (709 aa).

A helical transmembrane segment spans residues 1–21; the sequence is MGMSKSRGCFGYPLSIFFIVV. The Extracellular portion of the chain corresponds to 22–53; it reads NEFCERFSYYGMRALLVLYFRNFLGWDDNLST. Asparagine 50 carries N-linked (GlcNAc...) asparagine glycosylation. Residues 54-74 traverse the membrane as a helical segment; the sequence is AIYHTFVALCYLTPILGALIA. At 75-82 the chain is on the cytoplasmic side; that stretch reads DSWLGKFK. Residues 83-103 form a helical membrane-spanning segment; the sequence is TIVSLSIVYTIGQAVISVSSI. Over 104 to 118 the chain is Extracellular; the sequence is NDLTDHDHNGSPDSL. A helical membrane pass occupies residues 119–139; the sequence is PVHVALSMVGLALIALGTGGI. The Cytoplasmic segment spans residues 140–161; that stretch reads KPCVSAFGGDQFEEGQEKQRNR. A helical transmembrane segment spans residues 162–182; the sequence is FFSIFYLAINGGSLLSTIITP. Residues 183–198 are Extracellular-facing; that stretch reads ILRVQQCGIHSQQACY. The chain crosses the membrane as a helical span at residues 199-219; the sequence is PLAFGVPAALMAVALIVFVLG. Residues 220 to 276 are Cytoplasmic-facing; that stretch reads SGMYKKFQPQGNIMGKVAKCIGFAIKNRFRHRSKAYPKREHWLDWAKEKYDERLISQ. A helical transmembrane segment spans residues 277 to 297; sequence IKMVTKVMFLYIPLPMFWALF. Residues 298–327 lie on the Extracellular side of the membrane; it reads DQQGSRWTLQATTMNGKIGAIEIQPDQMQT. A helical transmembrane segment spans residues 328–348; sequence VNAILIVIMVPIVDAVVYPLI. The Cytoplasmic portion of the chain corresponds to 349–361; that stretch reads AKCGFNFTSLKKM. Residues 362 to 382 traverse the membrane as a helical segment; that stretch reads TVGMFLASMAFVVAAIVQVEI. Residues 383–585 are Extracellular-facing; it reads DKTLPVFPGG…PPNTVNMALQ (203 aa). An extracellular domain (ECD) region spans residues 383–585; it reads DKTLPVFPGG…PPNTVNMALQ (203 aa). 4 N-linked (GlcNAc...) asparagine glycosylation sites follow: asparagine 406, asparagine 439, asparagine 515, and asparagine 532. A helical transmembrane segment spans residues 586–606; the sequence is IPQYFLLTCGEVVFSVTGLEF. Residues 607–620 lie on the Cytoplasmic side of the membrane; sequence SYSQAPSNMKSVLQ. Residues 621-641 form a helical membrane-spanning segment; that stretch reads AGWLLTVAVGNIIVLIVAGAG. Topologically, residues 642 to 646 are extracellular; it reads HFPKQ. Residues 647–667 traverse the membrane as a helical segment; the sequence is WAEYILFASLLLVVCVIFAIM. At 668–709 the chain is on the cytoplasmic side; the sequence is ARFYTYINPAEIEAQFDEDEKKKGIGKENPYSSLEPVSQTNM. A disordered region spans residues 690 to 709; it reads KGIGKENPYSSLEPVSQTNM. Over residues 697-709 the composition is skewed to polar residues; that stretch reads PYSSLEPVSQTNM.

It belongs to the major facilitator superfamily. Proton-dependent oligopeptide transporter (POT/PTR) (TC 2.A.17) family. Interacts (via extracellular domain region) with trypsin.

It is found in the apical cell membrane. It carries out the reaction a dipeptide(out) + H(+)(out) = a dipeptide(in) + H(+)(in). The enzyme catalyses an L-amino acid tripeptide(out) + H(+)(out) = an L-amino acid tripeptide(in) + H(+)(in). It catalyses the reaction L-alanyl-L-lysine(out) + H(+)(out) = L-alanyl-L-lysine(in) + H(+)(in). The catalysed reaction is L-alanyl-L-proline(out) + H(+)(out) = L-alanyl-L-proline(in) + H(+)(in). It carries out the reaction L-alanyl-L-valine(out) + H(+)(out) = L-alanyl-L-valine(in) + H(+)(in). The enzyme catalyses carnosine(out) + H(+)(out) = carnosine(in) + H(+)(in). It catalyses the reaction glycyl-L-glutamine(out) + H(+)(out) = glycyl-L-glutamine(in) + H(+)(in). The catalysed reaction is glycyl-L-leucine(out) + H(+)(out) = glycyl-L-leucine(in) + H(+)(in). It carries out the reaction glycyl-L-proline(out) + H(+)(out) = glycyl-L-proline(in) + H(+)(in). The enzyme catalyses glycyl-sarcosine(out) + H(+)(out) = glycyl-sarcosine(in) + H(+)(in). It catalyses the reaction L-leucyl-L-leucine(out) + H(+)(out) = L-leucyl-L-leucine(in) + H(+)(in). The catalysed reaction is L-leucyl-L-proline(out) + H(+)(out) = L-leucyl-L-proline(in) + H(+)(in). It carries out the reaction L-phenylalanyl-L-leucine(out) + H(+)(out) = L-phenylalanyl-L-leucine(in) + H(+)(in). The enzyme catalyses L-phenylalanyl-L-phenylalanine(out) + H(+)(out) = L-phenylalanyl-L-phenylalanine(in) + H(+)(in). It catalyses the reaction L-lysyl-glycine(out) + H(+)(out) = L-lysyl-glycine(in) + H(+)(in). The catalysed reaction is L-tyrosylglycine(out) + H(+)(out) = L-tyrosylglycine(in) + H(+)(in). It carries out the reaction L-alanyl-L-aspartate(out) + 2 H(+)(out) = L-alanyl-L-aspartate(in) + 2 H(+)(in). The enzyme catalyses L-aspartyl-glycine(out) + 2 H(+)(out) = L-aspartyl-glycine(in) + 2 H(+)(in). It catalyses the reaction glycyl-L-aspartate(out) + 2 H(+)(out) = glycyl-L-aspartate(in) + 2 H(+)(in). The catalysed reaction is glycyl-L-glutamate(out) + 2 H(+)(out) = glycyl-L-glutamate(in) + 2 H(+)(in). It carries out the reaction L-alanyl-L-leucyl-L-alanine(out) + H(+)(out) = L-alanyl-L-leucyl-L-alanine(in) + H(+)(in). The enzyme catalyses L-alanyl-L-prolylglycine(out) + H(+)(out) = L-alanyl-L-prolylglycine(in) + H(+)(in). It catalyses the reaction glycylglycyl-L-isoleucine(out) + H(+)(out) = glycylglycyl-L-isoleucine(in) + H(+)(in). The catalysed reaction is glycylglycyl-L-proline(out) + H(+)(out) = glycylglycyl-L-proline(in) + H(+)(in). It carries out the reaction L-methionyl-L-phenylalanyl-L-methionine(out) + H(+)(out) = L-methionyl-L-phenylalanyl-L-methionine(in) + H(+)(in). The enzyme catalyses N-acetyl-D-muramoyl-L-alanyl-D-isoglutamine(out) + 2 H(+)(out) = N-acetyl-D-muramoyl-L-alanyl-D-isoglutamine(in) + 2 H(+)(in). It catalyses the reaction N(alpha)-formyl-L-methionyl-L-leucyl-L-phenylalanine(out) + 2 H(+)(out) = N(alpha)-formyl-L-methionyl-L-leucyl-L-phenylalanine(in) + 2 H(+)(in). Electrogenic proton-coupled amino-acid transporter that transports oligopeptides of 2 to 4 amino acids with a preference for dipeptides. Transports neutral and monovalently charged peptides with a proton to peptide stoichiometry of 1:1 or 2:1. Primarily responsible for the absorption of dietary di- and tripeptides from the small intestinal lumen. Mediates transepithelial transport of muramyl and N-formylated bacterial dipeptides contributing to recognition of pathogenic bacteria by the mucosal immune system. This Mus musculus (Mouse) protein is Solute carrier family 15 member 1.